A 164-amino-acid polypeptide reads, in one-letter code: Thiol peroxidase (164 aa).

Positions 18 to 163 (VNEGDIAPNF…FEAALKAYRN (146 aa)) constitute a Thioredoxin domain. Cys60 acts as the Cysteine sulfenic acid (-SOH) intermediate in catalysis. The cysteines at positions 60 and 93 are disulfide-linked.

Belongs to the peroxiredoxin family. Tpx subfamily. In terms of assembly, homodimer.

The catalysed reaction is a hydroperoxide + [thioredoxin]-dithiol = an alcohol + [thioredoxin]-disulfide + H2O. Thiol-specific peroxidase that catalyzes the reduction of hydrogen peroxide and organic hydroperoxides to water and alcohols, respectively. Plays a role in cell protection against oxidative stress by detoxifying peroxides. The protein is Thiol peroxidase of Staphylococcus epidermidis (strain ATCC 35984 / DSM 28319 / BCRC 17069 / CCUG 31568 / BM 3577 / RP62A).